We begin with the raw amino-acid sequence, 589 residues long: Kelch-like protein 25 (589 aa).

One can recognise a BTB domain in the interval 46–114 (TDVTLWAGDR…AYSSRIVINE (69 aa)). Residues 149 to 250 (CLGMMVLSDA…LPSDCLKKAV (102 aa)) enclose the BACK domain. 6 Kelch repeats span residues 296–340 (TLLI…AIGC), 341–388 (KVYV…ELEN), 389–444 (CLYV…SAKL), 446–492 (LFVF…VLGS), 493–538 (QIFI…ASGN), and 539–585 (KLYV…STWK).

As to quaternary structure, component of the BCR(KLHL25) E3 ubiquitin ligase complex, at least composed of CUL3, KLHL25 and RBX1.

It functions in the pathway protein modification; protein ubiquitination. Functionally, substrate-specific adapter of a BCR (BTB-CUL3-RBX1) E3 ubiquitin ligase complex involved in various processes, such as translation homeostasis and lipid synthesis. The BCR(KLHL25) ubiquitin ligase complex acts by mediating ubiquitination of hypophosphorylated EIF4EBP1 (4E-BP1): ubiquitination and subsequent degradation of hypophosphorylated EIF4EBP1 (4E-BP1) probably serves as a homeostatic mechanism to maintain translation and prevent eIF4E inhibition when eIF4E levels are low. The BCR(KLHL25) complex does not target EIF4EBP1 (4E-BP1) when it is hyperphosphorylated or associated with eIF4E. The BCR(KLHL25) complex also acts as a regulator of lipid synthesis by mediating ubiquitination and degradation of ACLY, thereby inhibiting lipid synthesis. BCR(KLHL25)-mediated degradation of ACLY promotes fatty acid oxidation and is required for differentiation of inducible regulatory T (iTreg) cells. In Rattus norvegicus (Rat), this protein is Kelch-like protein 25.